Here is a 142-residue protein sequence, read N- to C-terminus: Large ribosomal subunit protein uL11 (142 aa).

Belongs to the universal ribosomal protein uL11 family. As to quaternary structure, part of the ribosomal stalk of the 50S ribosomal subunit. Interacts with L10 and the large rRNA to form the base of the stalk. L10 forms an elongated spine to which L12 dimers bind in a sequential fashion forming a multimeric L10(L12)X complex. Post-translationally, one or more lysine residues are methylated.

Functionally, forms part of the ribosomal stalk which helps the ribosome interact with GTP-bound translation factors. The chain is Large ribosomal subunit protein uL11 from Serratia proteamaculans (strain 568).